We begin with the raw amino-acid sequence, 318 residues long: Carnitine monooxygenase reductase subunit (318 aa).

The 103-residue stretch at 5 to 107 folds into the FAD-binding FR-type domain; sequence YEMFPAVVTR…SEPKNLFPLA (103 aa). The 2Fe-2S ferredoxin-type domain occupies 233 to 318; it reads FTVVLAKSNQ…AKGKKLVLDL (86 aa). The [2Fe-2S] cluster site is built by cysteine 267, cysteine 272, cysteine 275, and cysteine 305.

Belongs to the PDR/VanB family. CntB subfamily. As to quaternary structure, composed of an oxygenase subunit (cntA) and a reductase subunit (cntB). Requires FMN as cofactor. [2Fe-2S] cluster is required as a cofactor.

It catalyses the reaction (R)-carnitine + NADH + O2 + H(+) = (3R)-3-hydroxy-4-oxobutanoate + trimethylamine + NAD(+) + H2O. The catalysed reaction is (R)-carnitine + NADPH + O2 + H(+) = (3R)-3-hydroxy-4-oxobutanoate + trimethylamine + NADP(+) + H2O. The protein operates within amine and polyamine metabolism; carnitine metabolism. In terms of biological role, converts carnitine to trimethylamine and malic semialdehyde. This Acinetobacter baumannii (strain ATCC 19606 / DSM 30007 / JCM 6841 / CCUG 19606 / CIP 70.34 / NBRC 109757 / NCIMB 12457 / NCTC 12156 / 81) protein is Carnitine monooxygenase reductase subunit.